The primary structure comprises 661 residues: MIWNGRLVLACVLLIAGCSGQVDAARTREQRKAFGSPNIVLPPGPAHEVASAKPARALGEKTFTLRHVYHHGTHNYPNLHRYIDIQPESKLQVSYDDGTTYEEAEVAFKAKAQSRIVQRMAHRSHSDIDAVQVHYFTYGQPADVEWTEDEIAGPNISDKSTVLTFAKMAANAYIFSRKDGEWQPVKGGFNYTDDFGWEQDGLRGHIFADEANSTVVIGLKGTSPAIFDGADTTGNDKLNDNLFGSCCCAQGGPFTWKKVCDCAGSSAYTCNNTCLVKSLREKGHYYWAVKDLYRNVTERYPDSEVWLSGHSLGGVVSSLLGLTYGLPTLTFEAFPDAMAASRLGLPTPPGYKIGSHQARPMTGIHHFGHTADPIYMGSCNGGTSFCSIGGYAFEGVCHTGETCTYDTVRDLGWRVGIGTHKIVSVIKDVIKVYDQPPSCEQDVECVDCYNWKYFENNGTETTTSKASTATSTTTRTRTETCKTPGWWGCLDESTTSAPTTSTSTSSSTSSTRTCETPGWFGCKDETTTTSSSSSISSPSATPAPTITTTSSLPTSTSTSTCKTPGWFGCYDESTTTSATPKPSSTARTVTKTKTTTSDDDDCTSREWFGLICVDPSPTTASGSSPSSTNLPTTRRKMCTKRHWYGTCKQWRFDDFDPKNDL.

Over M1 to W3 the chain is Cytoplasmic. Residues N4–A24 traverse the membrane as a helical; Signal-anchor for type II membrane protein segment. Residues A25–L661 lie on the Lumenal side of the membrane. N155, N190, N212, N271, and N295 each carry an N-linked (GlcNAc...) asparagine glycan. The active-site Charge relay system is the S311. N457 is a glycosylation site (N-linked (GlcNAc...) asparagine). 2 disordered regions span residues E492–S559 and T574–S597. 3 stretches are compositionally biased toward low complexity: residues S493–T513, T527–S559, and T574–T595.

The protein belongs to the AB hydrolase superfamily. Lipase family. Binds to both phosphatidylinositol (PI) and phosphatidylinositol 3,5-bisphosphate (PIP2).

Its subcellular location is the endosome. It is found in the multivesicular body membrane. It localises to the prevacuolar compartment membrane. The catalysed reaction is a triacylglycerol + H2O = a diacylglycerol + a fatty acid + H(+). In terms of biological role, lipase which is essential for lysis of subvacuolar cytoplasm to vacuole targeted bodies and intravacuolar autophagic bodies. Involved in the lysis of intravacuolar multivesicular body (MVB) vesicles. The intravacuolar membrane disintegration by ATG15 is critical to life span extension. The protein is Putative lipase ATG15 (ATG15) of Passalora fulva (Tomato leaf mold).